The following is a 331-amino-acid chain: LIM/homeobox protein Lhx9 (331 aa).

LIM zinc-binding domains lie at 71-132 (TLCA…FSVK) and 133-194 (RCAR…LVQG). Positions 253 to 275 (ETDLDRDQTYPPSQKTKRMRTSF) are disordered. The homeobox DNA-binding region spans 268-327 (TKRMRTSFKHHQLRTMKSYFAINHNPDAKDLKQLAQKTGLTKRVLQGEQCSGFNSHTTRR).

It localises to the nucleus. Its function is as follows. May be involved in gonadal development. This Xenopus laevis (African clawed frog) protein is LIM/homeobox protein Lhx9 (lhx9).